We begin with the raw amino-acid sequence, 663 residues long: Zyxin (663 aa).

The tract at residues 35–438 (PPKPKINPFK…QQDQTLGSQG (404 aa)) is disordered. Pro residues-rich tracts occupy residues 122–148 (FPPP…PPPL) and 160–211 (VPVP…PPSV). Over residues 298 to 314 (PQKTTEPPAEASQSSPK) the composition is skewed to polar residues. 2 stretches are compositionally biased toward basic and acidic residues: residues 342 to 353 (QRERPRVLEKPR) and 360 to 375 (EPEH…ERTR). Polar residues-rich tracts occupy residues 377–393 (LGPQ…QSTG) and 427–438 (TGQQDQTLGSQG). LIM zinc-binding domains are found at residues 470-531 (ELCG…TLEC), 532-589 (CAVC…RRYA), and 590-660 (PRCC…RARA).

Belongs to the zyxin/ajuba family. Interacts (via LIM2 domain) with hesx1/anf1. As to expression, at the early gastrula stage, expressed at a low level in the animal hemisphere. Expression rises by the end of gastrulation in the anterior part of the embryo, where it gradually increases by the midneurula stage. During neurulation, expression continues most intensively in the anterior part of the neural plate and around it. At later stages, intensely expressed in the brain and at lower levels in the spinal cord, eyes, nasal placodes, within somites, and around the cement gland.

It localises to the cytoplasm. The protein localises to the cytoskeleton. Its subcellular location is the cell junction. It is found in the focal adhesion. In terms of biological role, adhesion plaque protein. May be a component of a signal transduction pathway that mediates adhesion-stimulated changes in gene expression. Suppresses the transcription-repressing activity of hesx1/anf1. This is Zyxin from Xenopus laevis (African clawed frog).